The following is a 447-amino-acid chain: M-phase inducer phosphatase 3 (447 aa).

Serine 2 bears the N-acetylserine mark. 5 positions are modified to phosphoserine: serine 20, serine 38, serine 56, serine 60, and serine 63. Phosphothreonine; by CDK1 is present on threonine 66. Residues methionine 81–alanine 90 show a composition bias toward polar residues. The interval methionine 81 to threonine 109 is disordered. A Phosphoserine modification is found at serine 128. The residue at position 129 (threonine 129) is a Phosphothreonine. A Phosphoserine; by CDK1 modification is found at serine 192. A phosphoserine; by PLK3 mark is found at serine 213 and serine 220. The region spanning valine 294 to aspartate 401 is the Rhodanese domain. The active site involves cysteine 350. Position 445 is a phosphoserine (serine 445).

Belongs to the MPI phosphatase family. In terms of assembly, interacts with MAPK14 and 14-3-3 proteins. When phosphorylated on Ser-128 and/or Thr-129, interacts with PLK1. Interacts with MARK3/C-TAK1. In terms of processing, phosphorylated by PLK4. Phosphorylated by PLK1, leading to activate the phosphatase activity. Phosphorylated by CHEK1 and MAPKAPK2. This phosphorylation creates a binding site for 14-3-3 protein and inhibits the phosphatase activity. Phosphorylation by PLK3 at Ser-213 promotes nuclear translocation. Ser-220 is a minor phosphorylation site. Phosphorylation by CDK1 occurs at G2 and G2-M transition and leads to increased activity. In terms of tissue distribution, spleen and thymus.

The protein localises to the nucleus. It catalyses the reaction O-phospho-L-tyrosyl-[protein] + H2O = L-tyrosyl-[protein] + phosphate. Functions as a dosage-dependent inducer in mitotic control. Tyrosine protein phosphatase required for progression of the cell cycle. When phosphorylated, highly effective in activating G2 cells into prophase. Directly dephosphorylates CDK1 and activates its kinase activity. The chain is M-phase inducer phosphatase 3 (Cdc25c) from Mus musculus (Mouse).